The primary structure comprises 220 residues: Aspartic protease inhibitor 8 (220 aa).

Positions 1–23 (MMKCLFLLCLCLLPIVVFSSTFT) are cleaved as a signal peptide. A propeptide spanning residues 24 to 32 (SQNLIDLPS) is cleaved from the precursor. Disulfide bonds link Cys80/Cys125 and Cys174/Cys185.

It belongs to the protease inhibitor I3 (leguminous Kunitz-type inhibitor) family.

Its subcellular location is the vacuole. Its function is as follows. Inhibitor of cathepsin D (aspartic protease) and trypsin (serine protease). May protect the plant by inhibiting proteases of invading organisms. This is Aspartic protease inhibitor 8 from Solanum tuberosum (Potato).